The primary structure comprises 282 residues: Bis(5'-nucleosyl)-tetraphosphatase, symmetrical (282 aa).

The protein belongs to the Ap4A hydrolase family.

The catalysed reaction is P(1),P(4)-bis(5'-adenosyl) tetraphosphate + H2O = 2 ADP + 2 H(+). Functionally, hydrolyzes diadenosine 5',5'''-P1,P4-tetraphosphate to yield ADP. This chain is Bis(5'-nucleosyl)-tetraphosphatase, symmetrical, found in Burkholderia thailandensis (strain ATCC 700388 / DSM 13276 / CCUG 48851 / CIP 106301 / E264).